A 127-amino-acid polypeptide reads, in one-letter code: Fluoride-specific ion channel FluC (127 aa).

A run of 4 helical transmembrane segments spans residues 4 to 24 (LLLA…LLSM), 35 to 55 (LGTL…FAWF), 71 to 91 (TGFC…VFLL), and 103 to 123 (VFVN…LFSA). Glycine 75 and threonine 78 together coordinate Na(+).

The protein belongs to the fluoride channel Fluc/FEX (TC 1.A.43) family.

The protein resides in the cell inner membrane. The enzyme catalyses fluoride(in) = fluoride(out). Its activity is regulated as follows. Na(+) is not transported, but it plays an essential structural role and its presence is essential for fluoride channel function. Fluoride-specific ion channel. Important for reducing fluoride concentration in the cell, thus reducing its toxicity. The protein is Fluoride-specific ion channel FluC of Shigella flexneri serotype 5b (strain 8401).